Reading from the N-terminus, the 522-residue chain is MACKRHSVSDPISKDLVECLRESMQRDLKFETPYVFVIFGASGDLAKKKIYPTLWWLFRDNLLPVNIKFIGYARSDLTVFKLRESFEKNCKVRENEKCAFDDFIKKCSYVQGQYDTSEGFQRLQSSIDDFQKESNNQAVNRLYYLALPPSVFNVVSTELKKNCMDHGDSWTRVIIEKPFGHDLKSSCELSTHLAKLFKEDQIYRIDHYLGKEMVQNLMVMRFGNRILAPSWNRDHIASVMISFKEDFGTGGRAGYFDTAGIIRDVMQNHLMQILTLVAMEKPASLNAEDIRDEKVKVLKAAKVVELKDVVVGQYIASPEFDHPEASQGYKDDKSVPADSTTPTYALAVVHINNERWEGVPFFLRCGKALNEKKAEVRIQFKEVSGDIYPSGELKRSELVMRVQPNEAVYMKLMTKKPGMGFGVEETELDLTYNNRFKEVRLPDAYERLFLEVFMGSQINFVRTDELEYAWRILTPVLEELKKKKVQPVQYKFGSRGPTEGDELMKKYGFIFTGTYKWVAPKL.

NADP(+) is bound by residues 40–47, R74, and K177; that span reads GASGDLAK. D-glucose 6-phosphate-binding positions include K177, 207–211, E245, and D264; that span reads HYLGK. H269 (proton acceptor) is an active-site residue. R364 serves as a coordination point for NADP(+). Positions 367 and 372 each coordinate D-glucose 6-phosphate. Residues K373, R377, and R401 each coordinate NADP(+). Residue Q403 coordinates D-glucose 6-phosphate. NADP(+) contacts are provided by residues 409–411, 429–431, R495, and W517; these read YMK and DLT.

The protein belongs to the glucose-6-phosphate dehydrogenase family.

The protein localises to the cytoplasm. The protein resides in the cytosol. It catalyses the reaction D-glucose 6-phosphate + NADP(+) = 6-phospho-D-glucono-1,5-lactone + NADPH + H(+). Its pathway is carbohydrate degradation; pentose phosphate pathway; D-ribulose 5-phosphate from D-glucose 6-phosphate (oxidative stage): step 1/3. Its function is as follows. Cytosolic glucose-6-phosphate dehydrogenase that catalyzes the first and rate-limiting step of the oxidative branch within the pentose phosphate pathway/shunt, an alternative route to glycolysis for the dissimilation of carbohydrates and a major source of reducing power and metabolic intermediates for fatty acid and nucleic acid biosynthetic processes. This Caenorhabditis elegans protein is Glucose-6-phosphate 1-dehydrogenase (gspd-1).